Here is a 128-residue protein sequence, read N- to C-terminus: Gastrotropin (128 aa).

Alanine 2 bears the N-acetylalanine mark.

This sequence belongs to the calycin superfamily. Fatty-acid binding protein (FABP) family. As to expression, predominantly expressed in ileum; also expressed in ovary.

Its subcellular location is the cytoplasm. It is found in the membrane. Its function is as follows. Binds to bile acids and is involved in enterohepatic bile acid metabolism. Required for efficient apical to basolateral transport of conjugated bile acids in ileal enterocytes. Stimulates gastric acid and pepsinogen secretion. This is Gastrotropin (Fabp6) from Rattus norvegicus (Rat).